Consider the following 1487-residue polypeptide: Adhesion G protein-coupled receptor L2 (1487 aa).

The signal sequence occupies residues 1–25; sequence MVSSGCRMRSLWFIIIISFSPSTEG. Residues 26 to 855 are Extracellular-facing; sequence FSRAALPFGL…VHHLLLTVIT (830 aa). An SUEL-type lectin domain is found at 41–130; that stretch reads SCEGYSIDLR…KYLEVQYECV (90 aa). Asn99 carries an N-linked (GlcNAc...) asparagine glycan. An Olfactomedin-like domain is found at 139-398; sequence VCPGTLKAIV…ILRYSLEFGP (260 aa). Over residues 423 to 439 the composition is skewed to polar residues; sequence STTSSASQRGPVSSTAA. A disordered region spans residues 423-461; it reads STTSSASQRGPVSSTAAGPQDGSRGTKPPPAVSTTKIPP. 2 N-linked (GlcNAc...) asparagine glycosylation sites follow: Asn524 and Asn735. The region spanning 663-841 is the GAIN-B domain; it reads TRVSMPTENI…AILMAHREIA (179 aa). 2 disulfide bridges follow: Cys792–Cys823 and Cys811–Cys825. A GPS region spans residues 792–841; that stretch reads CSFWNYSERTMMGYWSTQGCKLVDTNKTRTTCACSHLTNFAILMAHREIA. The stachel stretch occupies residues 829–841; sequence TNFAILMAHREIA. Residues 856–876 form a helical membrane-spanning segment; the sequence is WVGIVVSLVCLAICIFTFCFF. Residues 877–884 are Cytoplasmic-facing; the sequence is RGLQSDRN. A helical transmembrane segment spans residues 885 to 905; sequence TIHKNLCINLFIAEFIFLIGI. Residues 906 to 911 are Extracellular-facing; the sequence is DKTKYT. Residues 912–932 form a helical membrane-spanning segment; the sequence is IACPVFAGLLHFFFLAAFSWM. Residues 933–955 lie on the Cytoplasmic side of the membrane; that stretch reads CLEGVQLYLMLVEVFESEYSRKK. Residues 956–976 traverse the membrane as a helical segment; sequence YYYVAGYLFPATVVGVSAAID. The Extracellular segment spans residues 977–994; sequence YKSYGTVQACWLHVDNYF. Residues 995-1015 traverse the membrane as a helical segment; it reads IWSFIGPVTFIILLNIIFLVI. The Cytoplasmic portion of the chain corresponds to 1016 to 1064; that stretch reads TLCKMVKHSNTLKPDSSRLENINNYRVCDGYYNTDLPGYEDNKPFIKSW. Residues 1065-1085 form a helical membrane-spanning segment; it reads VLGAFALLCLLGLTWSFGLLF. At 1086–1090 the chain is on the extracellular side; that stretch reads VNEET. A helical membrane pass occupies residues 1091–1111; the sequence is VVMAYLFTAFNAFQGLFIFIF. The disordered stretch occupies residues 1386 to 1430; the sequence is EADDHLQSPNRDSLYTSMPNLRDSPYPESSPDMAEDLSPSRRSEN. Polar residues predominate over residues 1392–1404; sequence QSPNRDSLYTSMP. A phosphoserine mark is found at Ser1402, Ser1437, and Ser1458.

The protein belongs to the G-protein coupled receptor 2 family. Adhesion G-protein coupled receptor (ADGR) subfamily. Heterodimer of 2 chains generated by proteolytic processing; the large extracellular N-terminal fragment and the membrane-bound C-terminal fragment predominantly remain associated and non-covalently linked. Autoproteolytically processed at the GPS region of the GAIN-B domain; this cleavage modulates receptor activity. In terms of tissue distribution, ubiquitously expressed. In neurons, specifically localizes to dendritic domains of CA1 pyramidal neurons in the S. lacunosummoleculare.

It localises to the postsynaptic cell membrane. Its activity is regulated as follows. Forms a heterodimer of 2 chains generated by proteolytic processing that remain associated through non-covalent interactions mediated by the GAIN-B domain. In the inactivated receptor, the Stachel sequence (also named stalk) is embedded in the GAIN-B domain, where it adopts a beta-strand conformation. On activation, the Stachel moves into the 7 transmembrane region and adopts a twisted hook-shaped configuration that forms contacts within the receptor, leading to coupling of a G-alpha protein, which activates signaling. The cleaved GAIN-B and N-terminal domains can then dissociate from the rest of the receptor. In terms of biological role, orphan adhesion G-protein coupled receptor (aGPCR), which mediates synapse specificity. Ligand binding causes a conformation change that triggers signaling via guanine nucleotide-binding proteins (G proteins) and modulates the activity of downstream effectors. Following G-protein coupled receptor activation, associates with cell adhesion molecules that are expressed at the surface of adjacent cells to direct synapse specificity. Specifically mediates the establishment of perforant-path synapses on CA1-region pyramidal neurons in the hippocampus. Localizes to postsynaptic spines in excitatory synapses in the S.lacunosum-moleculare and interacts with presynaptic cell adhesion molecules, such as teneurins, promoting synapse formation. In Mus musculus (Mouse), this protein is Adhesion G protein-coupled receptor L2.